A 325-amino-acid polypeptide reads, in one-letter code: DNA-directed RNA polymerase subunit alpha (325 aa).

The segment at 1–231 (MQTSLLKPKI…DQLSVFAALE (231 aa)) is alpha N-terminal domain (alpha-NTD). Residues 246–325 (IDPILLRPVD…ENWPPAGLDK (80 aa)) form an alpha C-terminal domain (alpha-CTD) region.

This sequence belongs to the RNA polymerase alpha chain family. Homodimer. The RNAP catalytic core consists of 2 alpha, 1 beta, 1 beta' and 1 omega subunit. When a sigma factor is associated with the core the holoenzyme is formed, which can initiate transcription.

The catalysed reaction is RNA(n) + a ribonucleoside 5'-triphosphate = RNA(n+1) + diphosphate. Its function is as follows. DNA-dependent RNA polymerase catalyzes the transcription of DNA into RNA using the four ribonucleoside triphosphates as substrates. In Paraburkholderia phymatum (strain DSM 17167 / CIP 108236 / LMG 21445 / STM815) (Burkholderia phymatum), this protein is DNA-directed RNA polymerase subunit alpha.